The chain runs to 330 residues: Phosphatidylglycerol--prolipoprotein diacylglyceryl transferase (330 aa).

Transmembrane regions (helical) follow at residues 22-42 (LPIRAYALLIILGIVAALVVG), 57-77 (YDIALWAVPFGLVGGRLYHLA), and 97-117 (IWDGGLGIWGAVALGCVGAWL). Arg-145 is a binding site for a 1,2-diacyl-sn-glycero-3-phospho-(1'-sn-glycerol). A run of 2 helical transmembrane segments spans residues 193–213 (VVQPTFLYELIWNVLVFFALI) and 257–277 (INSFTSTFVFIGAVVYIILAP).

Belongs to the Lgt family.

The protein localises to the cell membrane. The catalysed reaction is L-cysteinyl-[prolipoprotein] + a 1,2-diacyl-sn-glycero-3-phospho-(1'-sn-glycerol) = an S-1,2-diacyl-sn-glyceryl-L-cysteinyl-[prolipoprotein] + sn-glycerol 1-phosphate + H(+). Its pathway is protein modification; lipoprotein biosynthesis (diacylglyceryl transfer). Functionally, catalyzes the transfer of the diacylglyceryl group from phosphatidylglycerol to the sulfhydryl group of the N-terminal cysteine of a prolipoprotein, the first step in the formation of mature lipoproteins. The protein is Phosphatidylglycerol--prolipoprotein diacylglyceryl transferase of Mycobacterium leprae (strain Br4923).